A 147-amino-acid chain; its full sequence is SsrA-binding protein (147 aa).

The disordered stretch occupies residues 124-147 (KKHDKRQDIKDRDWARKQARQDFS). Over residues 128–147 (KRQDIKDRDWARKQARQDFS) the composition is skewed to basic and acidic residues.

It belongs to the SmpB family.

The protein localises to the cytoplasm. Required for rescue of stalled ribosomes mediated by trans-translation. Binds to transfer-messenger RNA (tmRNA), required for stable association of tmRNA with ribosomes. tmRNA and SmpB together mimic tRNA shape, replacing the anticodon stem-loop with SmpB. tmRNA is encoded by the ssrA gene; the 2 termini fold to resemble tRNA(Ala) and it encodes a 'tag peptide', a short internal open reading frame. During trans-translation Ala-aminoacylated tmRNA acts like a tRNA, entering the A-site of stalled ribosomes, displacing the stalled mRNA. The ribosome then switches to translate the ORF on the tmRNA; the nascent peptide is terminated with the 'tag peptide' encoded by the tmRNA and targeted for degradation. The ribosome is freed to recommence translation, which seems to be the essential function of trans-translation. This Neorickettsia sennetsu (strain ATCC VR-367 / Miyayama) (Ehrlichia sennetsu) protein is SsrA-binding protein.